Consider the following 534-residue polypeptide: C-type lectin domain family 18 member A (534 aa).

The interval Gly-47–Ala-88 is disordered. One can recognise an SCP domain in the interval Leu-139 to Tyr-270. The EGF-like domain occupies Pro-316–Gln-349. Intrachain disulfides connect Cys-324/Cys-337, Cys-339/Cys-348, Cys-415/Cys-520, and Cys-496/Cys-512. Positions Ile-394–Gln-521 constitute a C-type lectin domain.

Its subcellular location is the secreted. In Mus musculus (Mouse), this protein is C-type lectin domain family 18 member A (Clec18a).